A 264-amino-acid chain; its full sequence is ATP synthase subunit a (264 aa).

The next 7 membrane-spanning stretches (helical) occupy residues 29-49, 90-110, 111-131, 134-154, 177-197, 208-228, and 235-255; these read TWHI…LWIF, IAPL…MDMI, PVDW…KVVP, DVNI…YYSI, IPVN…SLAL, LIFI…TLGV, and LIFH…LTIV.

Belongs to the ATPase A chain family. F-type ATPases have 2 components, CF(1) - the catalytic core - and CF(0) - the membrane proton channel. CF(1) has five subunits: alpha(3), beta(3), gamma(1), delta(1), epsilon(1). CF(0) has three main subunits: a(1), b(2) and c(9-12). The alpha and beta chains form an alternating ring which encloses part of the gamma chain. CF(1) is attached to CF(0) by a central stalk formed by the gamma and epsilon chains, while a peripheral stalk is formed by the delta and b chains.

The protein localises to the cell inner membrane. Key component of the proton channel; it plays a direct role in the translocation of protons across the membrane. The protein is ATP synthase subunit a of Shewanella denitrificans (strain OS217 / ATCC BAA-1090 / DSM 15013).